The primary structure comprises 274 residues: MNPEHSPLGKATVYANQYDASLLFPIPRAGAREQIGIGAPLPFFGTDIWNAYELSWLNARGKPQIAIATFYVPAESPNIVESKSFKLYLGSFAQTAFESADAVRDALKRDVSAACDASVTVRLATPAEFRKLQMDELDGLSLDRLDLDAHVYETDPSFLTASHGEAPVEETLVTDLLKSNCPVTGQPDWGSVQIHYVGAPIDHAGLLRYIISFRNHTGFHEQCVERIFVDILRACQPVKLAVYARYTRRGGLDINPFRTNYNQPMPDNARTARQ.

80–82 (VES) is a binding site for substrate. 82 to 83 (SK) provides a ligand contact to NADPH. C181 (thioimide intermediate) is an active-site residue. The active-site Proton donor is the D188. Substrate is bound at residue 220 to 221 (HE). NADPH is bound at residue 249-250 (RG).

The protein belongs to the GTP cyclohydrolase I family. QueF type 2 subfamily. As to quaternary structure, homodimer.

It localises to the cytoplasm. It carries out the reaction 7-aminomethyl-7-carbaguanine + 2 NADP(+) = 7-cyano-7-deazaguanine + 2 NADPH + 3 H(+). The protein operates within tRNA modification; tRNA-queuosine biosynthesis. Catalyzes the NADPH-dependent reduction of 7-cyano-7-deazaguanine (preQ0) to 7-aminomethyl-7-deazaguanine (preQ1). This is NADPH-dependent 7-cyano-7-deazaguanine reductase from Burkholderia pseudomallei (strain 1710b).